The primary structure comprises 182 residues: ATP-dependent protease subunit HslV (182 aa).

The active site involves T12. Na(+) contacts are provided by A167, C170, and T173.

The protein belongs to the peptidase T1B family. HslV subfamily. As to quaternary structure, a double ring-shaped homohexamer of HslV is capped on each side by a ring-shaped HslU homohexamer. The assembly of the HslU/HslV complex is dependent on binding of ATP.

Its subcellular location is the cytoplasm. It carries out the reaction ATP-dependent cleavage of peptide bonds with broad specificity.. Its activity is regulated as follows. Allosterically activated by HslU binding. Protease subunit of a proteasome-like degradation complex believed to be a general protein degrading machinery. This Paramagnetospirillum magneticum (strain ATCC 700264 / AMB-1) (Magnetospirillum magneticum) protein is ATP-dependent protease subunit HslV.